Here is a 729-residue protein sequence, read N- to C-terminus: MNPFQKNESKETLFSPVSIEEVPPRPPSPPKKPSPTICGSNYPLSIAFIVVNEFCERFSYYGMKAVLILYFLYFLHWNEDTSTSIYHAFSSLCYFTPILGAAIADSWLGKFKTIIYLSLVYVLGHVIKSLGALPILGGQVVHTVLSLIGLSLIALGTGGIKPCVAAFGGDQFEEKHAEERTRYFSVFYLSINAGSLISTFITPMLRGDVQCFGEDCYALAFGVPGLLMVIALVVFAMGSKIYNKPPPEGNIVAQVFKCIWFAISNRFKNRSGDIPKRQHWLDWAAEKYPKQLIMDVKALTRVLFLYIPLPMFWALLDQQGSRWTLQAIRMNRNLGFFVLQPDQMQVLNPLLVLIFIPLFDFVIYRLVSKCGINFSSLRKMAVGMILACLAFAVAAAVEIKINEMAPAQPGPQEVFLQVLNLADDEVKVTVVGNENNSLLIESIKSFQKTPHYSKLHLKTKSQDFHFHLKYHNLSLYTEHSVQEKNWYSLVIREDGNSISSMMVKDTESRTTNGMTTVRFVNTLHKDVNISLSTDTSLNVGEDYGVSAYRTVQRGEYPAVHCRTEDKNFSLNLGLLDFGAAYLFVITNNTNQGLQAWKIEDIPANKMSIAWQLPQYALVTAGEVMFSVTGLEFSYSQAPSSMKSVLQAAWLLTIAVGNIIVLVVAQFSGLVQWAEFILFSCLLLVICLIFSIMGYYYVPVKTEDMRGPADKHIPHIQGNMIKLETKKTKL.

The segment at 1–34 (MNPFQKNESKETLFSPVSIEEVPPRPPSPPKKPS) is disordered. Residues 1-57 (MNPFQKNESKETLFSPVSIEEVPPRPPSPPKKPSPTICGSNYPLSIAFIVVNEFCER) lie on the Cytoplasmic side of the membrane. Phosphoserine is present on S9. A Phosphothreonine modification is found at T12. Positions 24 to 33 (PRPPSPPKKP) are enriched in pro residues. The residue at position 28 (S28) is a Phosphoserine. Residues 58 to 78 (FSYYGMKAVLILYFLYFLHWN) traverse the membrane as a helical segment. Over 79–83 (EDTST) the chain is Extracellular. A helical membrane pass occupies residues 84-104 (SIYHAFSSLCYFTPILGAAIA). The Cytoplasmic portion of the chain corresponds to 105–113 (DSWLGKFKT). The chain crosses the membrane as a helical span at residues 114–134 (IIYLSLVYVLGHVIKSLGALP). Topologically, residues 135–139 (ILGGQ) are extracellular. The chain crosses the membrane as a helical span at residues 140–160 (VVHTVLSLIGLSLIALGTGGI). The Cytoplasmic segment spans residues 161-183 (KPCVAAFGGDQFEEKHAEERTRY). Residues 184 to 204 (FSVFYLSINAGSLISTFITPM) traverse the membrane as a helical segment. The Extracellular segment spans residues 205–217 (LRGDVQCFGEDCY). The helical transmembrane segment at 218–238 (ALAFGVPGLLMVIALVVFAMG) threads the bilayer. The Cytoplasmic segment spans residues 239 to 295 (SKIYNKPPPEGNIVAQVFKCIWFAISNRFKNRSGDIPKRQHWLDWAAEKYPKQLIMD). Residues 296 to 316 (VKALTRVLFLYIPLPMFWALL) traverse the membrane as a helical segment. Residues 317–343 (DQQGSRWTLQAIRMNRNLGFFVLQPDQ) are Extracellular-facing. A helical transmembrane segment spans residues 344 to 364 (MQVLNPLLVLIFIPLFDFVIY). Topologically, residues 365-380 (RLVSKCGINFSSLRKM) are cytoplasmic. The chain crosses the membrane as a helical span at residues 381–401 (AVGMILACLAFAVAAAVEIKI). At 402 to 611 (NEMAPAQPGP…PANKMSIAWQ (210 aa)) the chain is on the extracellular side. The interval 402-611 (NEMAPAQPGP…PANKMSIAWQ (210 aa)) is extracellular domain (ECD). Residues N435, N472, N528, N567, and N587 are each glycosylated (N-linked (GlcNAc...) asparagine). Residues 612–632 (LPQYALVTAGEVMFSVTGLEF) form a helical membrane-spanning segment. The Cytoplasmic segment spans residues 633–643 (SYSQAPSSMKS). The chain crosses the membrane as a helical span at residues 644–664 (VLQAAWLLTIAVGNIIVLVVA). At 665-674 (QFSGLVQWAE) the chain is on the extracellular side. Residues 675-695 (FILFSCLLLVICLIFSIMGYY) traverse the membrane as a helical segment. The Cytoplasmic portion of the chain corresponds to 696 to 729 (YVPVKTEDMRGPADKHIPHIQGNMIKLETKKTKL).

The protein belongs to the major facilitator superfamily. Proton-dependent oligopeptide transporter (POT/PTR) (TC 2.A.17) family. As to quaternary structure, interacts (via extracellular domain region) with trypsin. In terms of tissue distribution, expressed in kidney. Not detected in intestine. Highly expressed in macrophages.

The protein localises to the apical cell membrane. Its subcellular location is the cytoplasmic vesicle. It localises to the phagosome membrane. The protein resides in the cell membrane. The catalysed reaction is a dipeptide(out) + 2 H(+)(out) = a dipeptide(in) + 2 H(+)(in). The enzyme catalyses N-acetyl-D-muramoyl-L-alanyl-D-isoglutamine(out) + 3 H(+)(out) = N-acetyl-D-muramoyl-L-alanyl-D-isoglutamine(in) + 3 H(+)(in). It carries out the reaction glycyl-L-leucine(out) + 2 H(+)(out) = glycyl-L-leucine(in) + 2 H(+)(in). It catalyses the reaction glycyl-L-lysine(out) + 2 H(+)(out) = glycyl-L-lysine(in) + 2 H(+)(in). The catalysed reaction is glycyl-L-glutamate(out) + 3 H(+)(out) = glycyl-L-glutamate(in) + 3 H(+)(in). The enzyme catalyses L-alanyl-L-alanine(out) + 2 H(+)(out) = L-alanyl-L-alanine(in) + 2 H(+)(in). It carries out the reaction an L-amino acid tripeptide(out) + 2 H(+)(out) = an L-amino acid tripeptide(in) + 2 H(+)(in). It catalyses the reaction carnosine(out) + 2 H(+)(out) = carnosine(in) + 2 H(+)(in). Its function is as follows. Proton-coupled amino-acid transporter that transports oligopeptides of 2 to 4 amino acids with a preference for dipeptides. Transports neutral and anionic dipeptides with a proton to peptide stoichiometry of 2:1 or 3:1. In kidney, involved in the absorption of circulating di- and tripeptides from the glomerular filtrate. Can also transport beta-lactam antibiotics, such as the aminocephalosporin cefadroxil, and other antiviral and anticancer drugs. Transports the dipeptide-like aminopeptidase inhibitor bestatin. Also able to transport carnosine. Involved in innate immunity by promoting the detection of microbial pathogens by NOD-like receptors (NLRs). Mediates transport of bacterial peptidoglycans across the plasma membrane or, in macrophages, the phagosome membrane: catalyzes the transport of certain bacterial peptidoglycans, such as muramyl dipeptide (MDP), the NOD2 ligand. The chain is Solute carrier family 15 member 2 from Homo sapiens (Human).